The primary structure comprises 116 residues: MSVETFTPAPLHFTQGAASKVKTLVDEEGNPRLKLRVFVTGGGCSGFQYGFTFDEDVAEDDTIVEREGVSLVVDAMSFQYLVGSEVDYQEGLEGSRFVIKNPNATTTCGCGSSFSI.

Positions 44, 108, and 110 each coordinate iron-sulfur cluster.

This sequence belongs to the HesB/IscA family. Homodimer. The cofactor is iron-sulfur cluster.

Required for insertion of 4Fe-4S clusters for at least IspG. This is Iron-sulfur cluster insertion protein ErpA from Ectopseudomonas mendocina (strain ymp) (Pseudomonas mendocina).